A 365-amino-acid polypeptide reads, in one-letter code: 3-isopropylmalate dehydrogenase (365 aa).

80-91 provides a ligand contact to NAD(+); it reads GPKWGTGAVRPE. Residues Arg-98, Arg-108, Arg-137, and Asp-226 each coordinate substrate. Asp-226, Asp-251, and Asp-255 together coordinate Mg(2+). 290–301 provides a ligand contact to NAD(+); that stretch reads GSAPDLPKGKVN.

It belongs to the isocitrate and isopropylmalate dehydrogenases family. As to quaternary structure, homodimer. The cofactor is Mg(2+). It depends on Mn(2+) as a cofactor.

It localises to the cytoplasm. The catalysed reaction is (2R,3S)-3-isopropylmalate + NAD(+) = 4-methyl-2-oxopentanoate + CO2 + NADH. Its pathway is amino-acid biosynthesis; L-leucine biosynthesis; L-leucine from 3-methyl-2-oxobutanoate: step 3/4. Its function is as follows. Catalyzes the oxidation of 3-carboxy-2-hydroxy-4-methylpentanoate (3-isopropylmalate) to 3-carboxy-4-methyl-2-oxopentanoate. The product decarboxylates to 4-methyl-2 oxopentanoate. The sequence is that of 3-isopropylmalate dehydrogenase (LEU2) from Candida glabrata (strain ATCC 2001 / BCRC 20586 / JCM 3761 / NBRC 0622 / NRRL Y-65 / CBS 138) (Yeast).